Here is a 505-residue protein sequence, read N- to C-terminus: 4-alpha-glucanotransferase (505 aa).

The protein belongs to the disproportionating enzyme family.

The protein resides in the cytoplasm. It catalyses the reaction Transfers a segment of a (1-&gt;4)-alpha-D-glucan to a new position in an acceptor, which may be glucose or a (1-&gt;4)-alpha-D-glucan.. The polypeptide is 4-alpha-glucanotransferase (malQ) (Synechocystis sp. (strain ATCC 27184 / PCC 6803 / Kazusa)).